Here is a 98-residue protein sequence, read N- to C-terminus: Cytochrome c2 (98 aa).

Pyrrolidone carboxylic acid is present on Q1. 4 residues coordinate heme c: C10, C13, H14, and M76.

The protein belongs to the cytochrome c family. In terms of processing, binds 1 heme c group covalently per subunit.

The protein localises to the periplasm. Its function is as follows. Cytochrome c2 is found mainly in purple, non-sulfur, photosynthetic bacteria where it functions as the electron donor to the oxidized bacteriochlorophyll in the photophosphorylation pathway. However, it may also have a role in the respiratory chain and is found in some non-photosynthetic bacteria. The polypeptide is Cytochrome c2 (Rhodoplanes tepidamans (Rhodoplanes cryptolactis)).